Here is a 188-residue protein sequence, read N- to C-terminus: Elongation factor P (188 aa).

It belongs to the elongation factor P family.

Its subcellular location is the cytoplasm. The protein operates within protein biosynthesis; polypeptide chain elongation. Functionally, involved in peptide bond synthesis. Stimulates efficient translation and peptide-bond synthesis on native or reconstituted 70S ribosomes in vitro. Probably functions indirectly by altering the affinity of the ribosome for aminoacyl-tRNA, thus increasing their reactivity as acceptors for peptidyl transferase. The protein is Elongation factor P of Nitrosospira multiformis (strain ATCC 25196 / NCIMB 11849 / C 71).